We begin with the raw amino-acid sequence, 313 residues long: Adhesin MafA 2/3 (313 aa).

The N-terminal stretch at Met-1 to Ala-14 is a signal peptide. Residue Cys-15 is the site of N-palmitoyl cysteine attachment. A lipid anchor (S-diacylglycerol cysteine) is attached at Cys-15. Residues Gly-282 to Lys-298 show a composition bias toward polar residues. The disordered stretch occupies residues Gly-282–Gly-313.

It belongs to the MafA family.

It localises to the cell outer membrane. This chain is Adhesin MafA 2/3 (mafA2), found in Neisseria gonorrhoeae (strain ATCC 700825 / FA 1090).